The following is a 572-amino-acid chain: MDSAKTCVTKFKSFAILLFTPILMLPLVILIPDKFARCAYVIVIMAVYWCTDVIPVAVTSLLPVLLFPLLKVLDSKQVCIQYMKDTNMLFLGSLIVAVAVERWKLHKRVALRMLLFVGTKPSRLMLGFMFVTAFLSMWISNTAATAMMIPIVEAMLQQMIAANTAVEASLGTLELLDKNKTSELPGSQVVFEDPNVQEQEDEETKNMYKAMHLCVCYSASIGGTATLTGTGPNVVLLGQMQELFPDSKDVLNYASWFGFAFPNMVMMLVLAWLWLQCLYMRHNLKKTCICCGEKKRDTEKIAYKVLNEEYQKLGSLSYPECNVLFCFTLLVILWFSRDPGFMPGWLSFAWVEGNTVHITDATVAIFVAILLFIIPSQKPKFNFSSQTEEERKTPFYPPALLDWKVAQEKVPWDIVLLLGGGFAMAKGCETSGLSKWMAAQMEPLRLVKPAVITLILSCLVAMTTECTSNVATTTLFLPIFASMARSIGIHPLYVMIPCTMSASLAFMLPVATPPNAIVFAYGHLRVVDMMKTGLIMNFVGILSVFLSVNTWGRAMFNLDNFPDWANSTSVNT.

A run of 8 helical transmembrane segments spans residues 13 to 33 (SFAI…LIPD), 53 to 73 (VIPV…LKVL), 80 to 100 (IQYM…AVAV), 124 to 144 (LMLG…NTAA), 218 to 238 (SASI…VLLG), 255 to 275 (SWFG…WLWL), 315 to 335 (SLSY…ILWF), and 357 to 377 (HITD…IPSQ). N382 is a glycosylation site (N-linked (GlcNAc...) asparagine). Transmembrane regions (helical) follow at residues 410–430 (VPWD…GCET), 443–463 (PLRL…VAMT), 491–511 (PLYV…LPVA), and 532–552 (TGLI…NTWG). N566 carries an N-linked (GlcNAc...) asparagine glycan.

Belongs to the SLC13A/DASS transporter (TC 2.A.47) family. NADC subfamily. In terms of assembly, homodimer.

It is found in the cell membrane. It catalyses the reaction citrate(out) + 4 Na(+)(out) = citrate(in) + 4 Na(+)(in). Inhibited by Li(+). In terms of biological role, high-affinity sodium/citrate cotransporter that mediates citrate entry into cells, which is a critical participant of biochemical pathways. May function in various metabolic processes in which citrate has a critical role such as energy production (Krebs cycle), fatty acid synthesis, cholesterol synthesis, glycolysis, and gluconeogenesis. Transports citrate into the cell in a Na(+)-dependent manner, recognizing the trivalent form of citrate (physiological pH) rather than the divalent form. Can recognizes succinate as a substrate, but its affinity for succinate is several fold lower than for citrate. The stoichiometry is probably 4 Na(+) for each carboxylate, irrespective of whether the translocated substrate is divalent or trivalent, rendering the process electrogenic. Involved in the regulation of citrate levels in the brain. This Mus musculus (Mouse) protein is Na(+)/citrate cotransporter (Slc13a5).